The primary structure comprises 335 residues: Lipoyl synthase (335 aa).

7 residues coordinate [4Fe-4S] cluster: C55, C60, C66, C81, C85, C88, and S292. Residues 67 to 281 (WEDREATFLI…SKAAEEIGFL (215 aa)) form the Radical SAM core domain.

It belongs to the radical SAM superfamily. Lipoyl synthase family. [4Fe-4S] cluster is required as a cofactor.

Its subcellular location is the cytoplasm. The catalysed reaction is [[Fe-S] cluster scaffold protein carrying a second [4Fe-4S](2+) cluster] + N(6)-octanoyl-L-lysyl-[protein] + 2 oxidized [2Fe-2S]-[ferredoxin] + 2 S-adenosyl-L-methionine + 4 H(+) = [[Fe-S] cluster scaffold protein] + N(6)-[(R)-dihydrolipoyl]-L-lysyl-[protein] + 4 Fe(3+) + 2 hydrogen sulfide + 2 5'-deoxyadenosine + 2 L-methionine + 2 reduced [2Fe-2S]-[ferredoxin]. Its pathway is protein modification; protein lipoylation via endogenous pathway; protein N(6)-(lipoyl)lysine from octanoyl-[acyl-carrier-protein]: step 2/2. Its function is as follows. Catalyzes the radical-mediated insertion of two sulfur atoms into the C-6 and C-8 positions of the octanoyl moiety bound to the lipoyl domains of lipoate-dependent enzymes, thereby converting the octanoylated domains into lipoylated derivatives. This is Lipoyl synthase from Kocuria rhizophila (strain ATCC 9341 / DSM 348 / NBRC 103217 / DC2201).